The following is a 72-amino-acid chain: Translation initiation factor IF-1 (72 aa).

Residues Met1 to Lys72 enclose the S1-like domain.

Belongs to the IF-1 family. In terms of assembly, component of the 30S ribosomal translation pre-initiation complex which assembles on the 30S ribosome in the order IF-2 and IF-3, IF-1 and N-formylmethionyl-tRNA(fMet); mRNA recruitment can occur at any time during PIC assembly.

It is found in the cytoplasm. Functionally, one of the essential components for the initiation of protein synthesis. Stabilizes the binding of IF-2 and IF-3 on the 30S subunit to which N-formylmethionyl-tRNA(fMet) subsequently binds. Helps modulate mRNA selection, yielding the 30S pre-initiation complex (PIC). Upon addition of the 50S ribosomal subunit IF-1, IF-2 and IF-3 are released leaving the mature 70S translation initiation complex. The polypeptide is Translation initiation factor IF-1 (Carboxydothermus hydrogenoformans (strain ATCC BAA-161 / DSM 6008 / Z-2901)).